A 102-amino-acid chain; its full sequence is uncharacterized protein (102 aa).

Helical transmembrane passes span 28-48 and 81-101; these read YLNL…LISI and LSVL…AGIG.

The protein resides in the membrane. This is an uncharacterized protein from Saccharomyces cerevisiae (strain ATCC 204508 / S288c) (Baker's yeast).